The sequence spans 373 residues: UDP-N-acetylglucosamine--N-acetylmuramyl-(pentapeptide) pyrophosphoryl-undecaprenol N-acetylglucosamine transferase (373 aa).

Residues 10–12, asparagine 124, arginine 166, serine 196, and glutamine 301 each bind UDP-N-acetyl-alpha-D-glucosamine; that span reads TGG.

Belongs to the glycosyltransferase 28 family. MurG subfamily.

It localises to the cell membrane. The enzyme catalyses di-trans,octa-cis-undecaprenyl diphospho-N-acetyl-alpha-D-muramoyl-L-alanyl-D-glutamyl-meso-2,6-diaminopimeloyl-D-alanyl-D-alanine + UDP-N-acetyl-alpha-D-glucosamine = di-trans,octa-cis-undecaprenyl diphospho-[N-acetyl-alpha-D-glucosaminyl-(1-&gt;4)]-N-acetyl-alpha-D-muramoyl-L-alanyl-D-glutamyl-meso-2,6-diaminopimeloyl-D-alanyl-D-alanine + UDP + H(+). The protein operates within cell wall biogenesis; peptidoglycan biosynthesis. Cell wall formation. Catalyzes the transfer of a GlcNAc subunit on undecaprenyl-pyrophosphoryl-MurNAc-pentapeptide (lipid intermediate I) to form undecaprenyl-pyrophosphoryl-MurNAc-(pentapeptide)GlcNAc (lipid intermediate II). The protein is UDP-N-acetylglucosamine--N-acetylmuramyl-(pentapeptide) pyrophosphoryl-undecaprenol N-acetylglucosamine transferase of Desulforudis audaxviator (strain MP104C).